Consider the following 231-residue polypeptide: Octanoyl-[acyl-carrier-protein]:protein N-octanoyltransferase LIPT2, mitochondrial (231 aa).

Residues 41 to 224 form the BPL/LPL catalytic domain; sequence GTKAGVLLVC…AFKETFKCTL (184 aa). Lysine 43 carries the post-translational modification N6-succinyllysine. Substrate-binding positions include 85 to 92, 154 to 156, and 167 to 169; these read RGGLATFH, AIG, and GLA. Residue cysteine 185 is the Acyl-thioester intermediate of the active site.

Belongs to the LipB family.

The protein resides in the mitochondrion. It catalyses the reaction octanoyl-[ACP] + L-lysyl-[protein] = N(6)-octanoyl-L-lysyl-[protein] + holo-[ACP] + H(+). Its pathway is protein modification; protein lipoylation via endogenous pathway; protein N(6)-(lipoyl)lysine from octanoyl-[acyl-carrier-protein]: step 1/2. Catalyzes the transfer of endogenously produced octanoic acid from octanoyl-acyl-carrier-protein onto the lipoyl domains of lipoate-dependent enzymes such as the protein H of the glycine cleavage system (GCSH). Lipoyl-ACP can also act as a substrate although octanoyl-ACP is likely to be the physiological substrate. The sequence is that of Octanoyl-[acyl-carrier-protein]:protein N-octanoyltransferase LIPT2, mitochondrial from Mus musculus (Mouse).